A 196-amino-acid polypeptide reads, in one-letter code: Imidazoleglycerol-phosphate dehydratase (196 aa).

This sequence belongs to the imidazoleglycerol-phosphate dehydratase family.

It is found in the cytoplasm. It carries out the reaction D-erythro-1-(imidazol-4-yl)glycerol 3-phosphate = 3-(imidazol-4-yl)-2-oxopropyl phosphate + H2O. Its pathway is amino-acid biosynthesis; L-histidine biosynthesis; L-histidine from 5-phospho-alpha-D-ribose 1-diphosphate: step 6/9. This is Imidazoleglycerol-phosphate dehydratase from Chlorobium chlorochromatii (strain CaD3).